Reading from the N-terminus, the 845-residue chain is Ribonucleoside-diphosphate reductase subunit alpha (845 aa).

In terms of domain architecture, ATP-cone spans 1 to 98; the sequence is MHIIKRNGEP…LYRDDRTKKR (98 aa). Substrate-binding positions include threonine 303, 318–319, glycine 347, 534–538, and 725–729; these read SC, NLCTE, and PTSST. Cysteine 319 and cysteine 574 are disulfide-bonded. Catalysis depends on asparagine 534, which acts as the Proton acceptor. Cysteine 536 (cysteine radical intermediate) is an active-site residue. The active-site Proton acceptor is glutamate 538.

Belongs to the ribonucleoside diphosphate reductase large chain family. As to quaternary structure, tetramer of two alpha and two beta subunits.

It carries out the reaction a 2'-deoxyribonucleoside 5'-diphosphate + [thioredoxin]-disulfide + H2O = a ribonucleoside 5'-diphosphate + [thioredoxin]-dithiol. Under complex allosteric control mediated by deoxynucleoside triphosphates and ATP binding. The type of nucleotide bound at the specificity site determines substrate preference. It seems probable that ATP makes the enzyme reduce CDP and UDP, dGTP favors ADP reduction and dTTP favors GDP reduction. Its function is as follows. Provides the precursors necessary for DNA synthesis. Catalyzes the biosynthesis of deoxyribonucleotides from the corresponding ribonucleotides. The chain is Ribonucleoside-diphosphate reductase subunit alpha (nrdA) from Treponema pallidum (strain Nichols).